A 195-amino-acid polypeptide reads, in one-letter code: Large ribosomal subunit protein uL5 (195 aa).

It belongs to the universal ribosomal protein uL5 family. Part of the 50S ribosomal subunit; part of the 5S rRNA/L5/L18/L25 subcomplex. Contacts the 5S rRNA and the P site tRNA. Forms a bridge to the 30S subunit in the 70S ribosome.

Its function is as follows. This is one of the proteins that bind and probably mediate the attachment of the 5S RNA into the large ribosomal subunit, where it forms part of the central protuberance. In the 70S ribosome it contacts protein S13 of the 30S subunit (bridge B1b), connecting the 2 subunits; this bridge is implicated in subunit movement. Contacts the P site tRNA; the 5S rRNA and some of its associated proteins might help stabilize positioning of ribosome-bound tRNAs. This chain is Large ribosomal subunit protein uL5, found in Leifsonia xyli subsp. xyli (strain CTCB07).